The following is an 815-amino-acid chain: DNA gyrase subunit B (815 aa).

Residues 1 to 21 (MEKTPATGSAVAPPPVEYGTD) are disordered. Positions 430–545 (SELYIVEGDS…AISTSRSRRS (116 aa)) constitute a Toprim domain. Residues glutamate 436, aspartate 509, and aspartate 511 each contribute to the Mg(2+) site.

The protein belongs to the type II topoisomerase GyrB family. As to quaternary structure, heterotetramer, composed of two GyrA and two GyrB chains. In the heterotetramer, GyrA contains the active site tyrosine that forms a transient covalent intermediate with DNA, while GyrB binds cofactors and catalyzes ATP hydrolysis. Mg(2+) serves as cofactor. Mn(2+) is required as a cofactor. The cofactor is Ca(2+).

The protein localises to the cytoplasm. The enzyme catalyses ATP-dependent breakage, passage and rejoining of double-stranded DNA.. Functionally, a type II topoisomerase that negatively supercoils closed circular double-stranded (ds) DNA in an ATP-dependent manner to modulate DNA topology and maintain chromosomes in an underwound state. Negative supercoiling favors strand separation, and DNA replication, transcription, recombination and repair, all of which involve strand separation. Also able to catalyze the interconversion of other topological isomers of dsDNA rings, including catenanes and knotted rings. Type II topoisomerases break and join 2 DNA strands simultaneously in an ATP-dependent manner. This chain is DNA gyrase subunit B, found in Myxococcus xanthus.